Consider the following 73-residue polypeptide: ComX pheromone (73 aa).

Positions 1-52 (MKHIDKIISHLVNNPEAFDQFKNGNLTLLNINEKEKKAILYAFEQGEVPRTS) are excised as a propeptide. A lipid anchor (3'-farnesyl-2',N2-cyclotryptophan) is attached at Trp-54. Positions 59–73 (AISNFFEDDKRKSLI) are excised as a propeptide.

As to quaternary structure, interacts directly with the sensor histidine kinase ComP and stimulates its activity. Post-translationally, trp-54 is modified by farnesylation, which is essential for activity. Modified by the tryptophan prenyltransferase ComQ before export to the extracellular environment.

It localises to the secreted. Its function is as follows. Part of a major quorum-sensing system that regulates the development of genetic competence. Acts through the activation of the two-component regulatory system ComP/ComA composed of a sensor histidine kinase, ComP, and a response regulator, ComA. Activates the expression of the genes for biosynthesis of poly-gamma-glutamic acid (gamma-PGA), which is involved in biofilm formation in B.subtilis natto. The protein is ComX pheromone of Bacillus subtilis subsp. natto (strain BEST195).